The chain runs to 116 residues: Protein Rev (116 aa).

Phosphoserine; by host CK2 occurs at positions 5 and 8. Positions 18 to 26 (IIKHLYQSN) are homomultimerization. The segment at 20–48 (KHLYQSNPPPKPEGTRQARRNRRRRWRER) is disordered. The Nuclear localization signal and RNA-binding (RRE) motif lies at 34–50 (TRQARRNRRRRWRERQR). The segment covering 36-48 (QARRNRRRRWRER) has biased composition (basic residues). The short motif at 73–84 (LQLPPLERLTLD) is the Nuclear export signal and binding to XPO1 element. A disordered region spans residues 91-116 (TSGTQGVGSPQILVESPAVLESGTKE). 2 positions are modified to phosphoserine; by host: Ser-92 and Ser-99.

This sequence belongs to the HIV-1 REV protein family. In terms of assembly, homomultimer; when bound to the RRE. Multimeric assembly is essential for activity and may involve XPO1. Binds to human KPNB1, XPO1, TNPO1, RANBP5 and IPO7. Interacts with the viral Integrase. Interacts with human KHDRBS1. Interacts with human NAP1; this interaction decreases Rev multimerization and stimulates its activity. Interacts with human DEAD-box helicases DDX3 and DDX24; these interactions may serve for viral RNA export to the cytoplasm and packaging, respectively. Interacts with human PSIP1; this interaction may inhibit HIV-1 DNA integration by promoting dissociation of the Integrase-LEDGF/p75 complex. Asymmetrically arginine dimethylated at one site by host PRMT6. Methylation impairs the RNA-binding activity and export of viral RNA from the nucleus to the cytoplasm. In terms of processing, phosphorylated by protein kinase CK2. Presence of, and maybe binding to the N-terminus of the regulatory beta subunit of CK2 is necessary for CK2-mediated Rev's phosphorylation.

The protein localises to the host nucleus. The protein resides in the host nucleolus. It is found in the host cytoplasm. Escorts unspliced or incompletely spliced viral pre-mRNAs (late transcripts) out of the nucleus of infected cells. These pre-mRNAs carry a recognition sequence called Rev responsive element (RRE) located in the env gene, that is not present in fully spliced viral mRNAs (early transcripts). This function is essential since most viral proteins are translated from unspliced or partially spliced pre-mRNAs which cannot exit the nucleus by the pathway used by fully processed cellular mRNAs. Rev itself is translated from a fully spliced mRNA that readily exits the nucleus. Rev's nuclear localization signal (NLS) binds directly to KPNB1/Importin beta-1 without previous binding to KPNA1/Importin alpha-1. KPNB1 binds to the GDP bound form of RAN (Ran-GDP) and targets Rev to the nucleus. In the nucleus, the conversion from Ran-GDP to Ran-GTP dissociates Rev from KPNB1 and allows Rev's binding to the RRE in viral pre-mRNAs. Rev multimerization on the RRE via cooperative assembly exposes its nuclear export signal (NES) to the surface. Rev can then form a complex with XPO1/CRM1 and Ran-GTP, leading to nuclear export of the complex. Conversion from Ran-GTP to Ran-GDP mediates dissociation of the Rev/RRE/XPO1/RAN complex, so that Rev can return to the nucleus for a subsequent round of export. Beside KPNB1, also seems to interact with TNPO1/Transportin-1, RANBP5/IPO5 and IPO7/RANBP7 for nuclear import. The nucleoporin-like HRB/RIP is an essential cofactor that probably indirectly interacts with Rev to release HIV RNAs from the perinuclear region to the cytoplasm. The chain is Protein Rev from Human immunodeficiency virus type 1 group M subtype B (isolate CDC-451) (HIV-1).